Consider the following 231-residue polypeptide: Urease subunit gamma/beta (231 aa).

Residues 1-101 (MLLTPTELER…LVTVHQPIRP (101 aa)) form a urease gamma region. The tract at residues 102–231 (GQLPLAVMPT…RARAQFFKGA (130 aa)) is urease beta.

It in the N-terminal section; belongs to the urease gamma subunit family. This sequence in the C-terminal section; belongs to the urease beta subunit family. In terms of assembly, heterohexamer of 3 UreC (alpha) and 3 UreAB (gamma/beta) subunits.

Its subcellular location is the cytoplasm. The catalysed reaction is urea + 2 H2O + H(+) = hydrogencarbonate + 2 NH4(+). The protein operates within nitrogen metabolism; urea degradation; CO(2) and NH(3) from urea (urease route): step 1/1. The chain is Urease subunit gamma/beta from Pseudomonas syringae pv. syringae (strain B728a).